The sequence spans 506 residues: Glucosidase 2 subunit beta (506 aa).

Positions 1 to 23 (MKFSQWYTLTAPLLISSLYTVNA) are cleaved as a signal peptide. Cysteine 86 and cysteine 108 are oxidised to a cystine. 2 coiled-coil regions span residues 172 to 243 (SLVA…LYET) and 338 to 374 (ESYRRFEAAQRDLDAAEENEKSLEKEHTKLMHELEYH). Positions 279–474 (ESCNNHLSML…KMKSPAACSP (196 aa)) constitute an MRH domain. Cystine bridges form between cysteine 431-cysteine 460 and cysteine 445-cysteine 472. The ER retrieval sequence signature appears at 503–506 (VDEL).

Heterodimer of a catalytic subunit alpha (gls2) and a subunit beta (gtb1).

Its subcellular location is the endoplasmic reticulum. Subunit of glucosidase 2, which cleaves sequentially the 2 innermost alpha-1,3-linked glucose residues from the Glc(2)Man(9)GlcNAc(2) oligosaccharide precursor of immature glycoproteins in the endoplasmic reticulum (ER). Specifically required for the cleavage of the final glucose. The subunit beta retains the catalytic subunit alpha in the ER. The polypeptide is Glucosidase 2 subunit beta (gtb1) (Schizosaccharomyces pombe (strain 972 / ATCC 24843) (Fission yeast)).